A 395-amino-acid polypeptide reads, in one-letter code: Flagellin A (395 aa).

This sequence belongs to the bacterial flagellin family.

It localises to the secreted. Its subcellular location is the bacterial flagellum. Its function is as follows. Flagellin is the subunit protein which polymerizes to form the filaments of bacterial flagella. Homomer of FlaA is able to form a functional filament. The sequence is that of Flagellin A (flaA) from Rhizobium meliloti (Ensifer meliloti).